Consider the following 138-residue polypeptide: Small ribosomal subunit protein uS9c (138 aa).

Belongs to the universal ribosomal protein uS9 family.

It localises to the plastid. It is found in the chloroplast. This is Small ribosomal subunit protein uS9c (rps9) from Phaeodactylum tricornutum (strain CCAP 1055/1).